The chain runs to 360 residues: RNA demethylase ALKBH5 (360 aa).

The tract at residues 1–53 (MSATYTDLREKLQSLNRDSPKEVRKRKQPASDTEEEDEAGSEPEAEEEEARKV) is disordered. Residues 7–22 (DLREKLQSLNRDSPKE) show a composition bias toward basic and acidic residues. Over residues 32–48 (DTEEEDEAGSEPEAEEE) the composition is skewed to acidic residues. Tyr107 is a catalytic residue. 2-oxoglutarate-binding residues include Asn161, Tyr163, His172, His234, and Arg245. A disulfide bond links Cys198 and Cys235. Residues 261–360 (EMKSLSSSYQ…PVRKVKMRRH (100 aa)) are disordered. A compositionally biased stretch (polar residues) spans 264 to 280 (SLSSSYQPERLQGSNRQ). Residues 281–290 (HILKPKRSHR) are compositionally biased toward basic residues. Basic and acidic residues-rich tracts occupy residues 291–312 (KADPDAAHRPRILEMDKEENRR) and 330–340 (YWRRSHDHVDT).

Belongs to the alkB family. As to quaternary structure, monomer. Fe(2+) serves as cofactor.

The protein localises to the nucleus speckle. The enzyme catalyses an N(6)-methyladenosine in mRNA + 2-oxoglutarate + O2 = an adenosine in mRNA + formaldehyde + succinate + CO2. In terms of biological role, dioxygenase that specifically demethylates N(6)-methyladenosine (m6A) RNA, the most prevalent internal modification of messenger RNA (mRNA) in higher eukaryotes. Demethylates RNA by oxidative demethylation, which requires molecular oxygen, alpha-ketoglutarate and iron. Demethylation of m6A mRNA affects mRNA processing, translation and export. In Xenopus laevis (African clawed frog), this protein is RNA demethylase ALKBH5 (alkbh5).